The sequence spans 400 residues: Large envelope protein (400 aa).

Met-1 is modified (N-acetylmethionine). The N-myristoyl glycine; by host moiety is linked to residue Gly-2. The tract at residues 2 to 119 is pre-S1; it reads GGWSSKHRKG…PPLRDTHPQA (118 aa). The tract at residues 2 to 174 is pre-S; sequence GGWSSKHRKG…FTKTGDPASN (173 aa). The Virion surface; in external conformation portion of the chain corresponds to 2 to 181; it reads GGWSSKHRKG…ASNMESTTSG (180 aa). Over 2–253 the chain is Intravirion; in internal conformation; the sequence is GGWSSKHRKG…PGYRWMCLRR (252 aa). An N-linked (GlcNAc...) asparagine glycan is attached at Trp-4. Residues 89-117 are disordered; sequence PAAPPPASTNRQSGRQPTPISPPLRDTHP. A compositionally biased stretch (polar residues) spans 96–106; the sequence is STNRQSGRQPT. A pre-S2 region spans residues 120-174; that stretch reads MQWNSTAFHQALQDPRVRGLYFPAGGSSSGTVNPVPNTVSHISSIFTKTGDPASN. Residues 182–202 form a helical membrane-spanning segment; sequence FLGPLLVLQAGFFLLTRILTI. Residues 203–253 lie on the Intravirion; in external conformation side of the membrane; it reads PQSLDSWWTSLNFLGGAPGCIGQNSQSQTSNHSPTSCPPTCPGYRWMCLRR. Residues 254 to 274 form a helical membrane-spanning segment; sequence FIIFLFILLLCLIFLLVLLDY. Over 275-348 the chain is Virion surface; it reads QGMLPVCPLL…WASVRFSWLS (74 aa). Residue Asn-320 is glycosylated (N-linked (GlcNAc...) asparagine; by host). Residues 349 to 369 traverse the membrane as a helical segment; that stretch reads LLVPFVQWFAGLSPTVWLSVI. At 370 to 375 the chain is on the intravirion side; it reads WMIWYW. Residues 376–398 traverse the membrane as a helical segment; sequence GPSLYNILSPFLPLLPIFLCLWV. Residues 399–400 are Virion surface-facing; the sequence is YI.

Belongs to the orthohepadnavirus major surface antigen family. In terms of assembly, in its internal form (Li-HBsAg), interacts with the capsid protein and with the isoform S. Interacts with host chaperone CANX. Associates with host chaperone CANX through its pre-S2 N glycan; this association may be essential for isoform M proper secretion. As to quaternary structure, interacts with isoform L. Interacts with the antigens of satellite virus HDV (HDVAgs); this interaction is required for encapsidation of HDV genomic RNA. In terms of processing, isoform M is N-terminally acetylated by host at a ratio of 90%, and N-glycosylated by host at the pre-S2 region. Myristoylated.

The protein localises to the virion membrane. The large envelope protein exists in two topological conformations, one which is termed 'external' or Le-HBsAg and the other 'internal' or Li-HBsAg. In its external conformation the protein attaches the virus to cell receptors and thereby initiating infection. This interaction determines the species specificity and liver tropism. This attachment induces virion internalization predominantly through caveolin-mediated endocytosis. The large envelope protein also assures fusion between virion membrane and endosomal membrane. In its internal conformation the protein plays a role in virion morphogenesis and mediates the contact with the nucleocapsid like a matrix protein. Functionally, the middle envelope protein plays an important role in the budding of the virion. It is involved in the induction of budding in a nucleocapsid independent way. In this process the majority of envelope proteins bud to form subviral lipoprotein particles of 22 nm of diameter that do not contain a nucleocapsid. This Homo sapiens (Human) protein is Large envelope protein.